Reading from the N-terminus, the 299-residue chain is MSSIKVECVLRENYRCGESPVWEEASQSLLFVDIPSKIICRWDTVSNQVQRVAVDAPVSSVALRQLGGYVATIGTKFCALNWENQSVFVLAMVDEDKKNNRFNDGKVDPAGRYFAGTMAEETAPAVLERHQGSLYSLFPDHSVKKYFDQVDISNGLDWSLDHKIFYYIDSLSYTVDAFDYDLQTGQISNRRIVYKMEKDEQIPDGMCIDAEGKLWVACYNGGRVIRLDPETGKRLQTVKLPVDKTTSCCFGGKDYSEMYVTCARDGLNAEGLLRQPDAGNIFKITGLGVKGIAPYSYAG.

Glu18 serves as a coordination point for a divalent metal cation. Arg101, Asn103, and Glu121 together coordinate substrate. Lys144 is modified (N6-succinyllysine). A divalent metal cation contacts are provided by Asn154 and Asp204. The Proton donor/acceptor role is filled by Asp204. N6-succinyllysine is present on residues Lys244 and Lys253.

It belongs to the SMP-30/CGR1 family. Monomer. Requires Zn(2+) as cofactor. The cofactor is Mn(2+). Ca(2+) is required as a cofactor. Mg(2+) serves as cofactor. In terms of tissue distribution, mainly present in the liver. Weak expression was found in the brain, lung and kidney.

The protein localises to the cytoplasm. The catalysed reaction is D-glucono-1,5-lactone + H2O = D-gluconate + H(+). It participates in cofactor biosynthesis; L-ascorbate biosynthesis via UDP-alpha-D-glucuronate pathway; L-ascorbate from UDP-alpha-D-glucuronate: step 3/4. In terms of biological role, gluconolactonase with low activity towards other sugar lactones, including gulonolactone and galactonolactone. Catalyzes a key step in ascorbic acid (vitamin C) biosynthesis. Can also hydrolyze diisopropyl phosphorofluoridate and phenylacetate (in vitro). Calcium-binding protein. Modulates Ca(2+) signaling, and Ca(2+)-dependent cellular processes and enzyme activities. This Mus musculus (Mouse) protein is Regucalcin (Rgn).